Reading from the N-terminus, the 884-residue chain is Probable leucine--tRNA ligase, cytoplasmic (884 aa).

A 'HIGH' region motif is present at residues 40-50; that stretch reads PYMNGKLHLGH. The 'KMSKS' region motif lies at 566–570; it reads KMSKS. Lysine 569 contributes to the ATP binding site.

Belongs to the class-I aminoacyl-tRNA synthetase family.

It is found in the cytoplasm. The enzyme catalyses tRNA(Leu) + L-leucine + ATP = L-leucyl-tRNA(Leu) + AMP + diphosphate. The sequence is that of Probable leucine--tRNA ligase, cytoplasmic from Vairimorpha ceranae (strain BRL01) (Microsporidian parasite).